A 261-amino-acid chain; its full sequence is Small ribosomal subunit protein uS2 (261 aa).

At Ser2 the chain carries N-acetylserine. Residues 211-261 (EQNAAEDSKAEDAEEAPVADAEPDWSGETEDVDWAESGATPAAEEAAASNW) are disordered. Residues 222 to 244 (DAEEAPVADAEPDWSGETEDVDW) are compositionally biased toward acidic residues. Residues 245 to 261 (AESGATPAAEEAAASNW) show a composition bias toward low complexity.

The protein belongs to the universal ribosomal protein uS2 family. Component of the small ribosomal subunit. Mature ribosomes consist of a small (40S) and a large (60S) subunit. The 40S subunit contains about 33 different proteins and 1 molecule of RNA (18S). The 60S subunit contains about 49 different proteins and 3 molecules of RNA (25S, 5.8S and 5S). Interacts with RPS21.

It localises to the cytoplasm. In terms of biological role, required for the assembly and/or stability of the 40S ribosomal subunit. Required for the processing of the 20S rRNA-precursor to mature 18S rRNA in a late step of the maturation of 40S ribosomal subunits. The polypeptide is Small ribosomal subunit protein uS2 (Meyerozyma guilliermondii (strain ATCC 6260 / CBS 566 / DSM 6381 / JCM 1539 / NBRC 10279 / NRRL Y-324) (Yeast)).